The chain runs to 787 residues: Endonuclease MutS2 (787 aa).

Residue 331–338 (GPNTGGKT) coordinates ATP. A Smr domain is found at 711-786 (IDVRGKTSDD…EQGVTVVELK (76 aa)).

Belongs to the DNA mismatch repair MutS family. MutS2 subfamily. As to quaternary structure, homodimer. Binds to stalled ribosomes, contacting rRNA.

In terms of biological role, endonuclease that is involved in the suppression of homologous recombination and thus may have a key role in the control of bacterial genetic diversity. Its function is as follows. Acts as a ribosome collision sensor, splitting the ribosome into its 2 subunits. Detects stalled/collided 70S ribosomes which it binds and splits by an ATP-hydrolysis driven conformational change. Acts upstream of the ribosome quality control system (RQC), a ribosome-associated complex that mediates the extraction of incompletely synthesized nascent chains from stalled ribosomes and their subsequent degradation. Probably generates substrates for RQC. This Caldicellulosiruptor bescii (strain ATCC BAA-1888 / DSM 6725 / KCTC 15123 / Z-1320) (Anaerocellum thermophilum) protein is Endonuclease MutS2.